Here is a 144-residue protein sequence, read N- to C-terminus: 3-hydroxyacyl-[acyl-carrier-protein] dehydratase FabZ (144 aa).

Residue histidine 51 is part of the active site.

It belongs to the thioester dehydratase family. FabZ subfamily.

It is found in the cytoplasm. The catalysed reaction is a (3R)-hydroxyacyl-[ACP] = a (2E)-enoyl-[ACP] + H2O. Functionally, involved in unsaturated fatty acids biosynthesis. Catalyzes the dehydration of short chain beta-hydroxyacyl-ACPs and long chain saturated and unsaturated beta-hydroxyacyl-ACPs. This Clostridium botulinum (strain 657 / Type Ba4) protein is 3-hydroxyacyl-[acyl-carrier-protein] dehydratase FabZ.